A 286-amino-acid polypeptide reads, in one-letter code: NADPH-dependent 7-cyano-7-deazaguanine reductase (286 aa).

A substrate-binding site is contributed by 92-94 (IES). Position 94-95 (94-95 (SK)) interacts with NADPH. The Thioimide intermediate role is filled by cysteine 194. The Proton donor role is filled by aspartate 201. 233–234 (HE) is a binding site for substrate. Residue 262–263 (RG) participates in NADPH binding.

Belongs to the GTP cyclohydrolase I family. QueF type 2 subfamily. In terms of assembly, homodimer.

The protein localises to the cytoplasm. It catalyses the reaction 7-aminomethyl-7-carbaguanine + 2 NADP(+) = 7-cyano-7-deazaguanine + 2 NADPH + 3 H(+). It participates in tRNA modification; tRNA-queuosine biosynthesis. In terms of biological role, catalyzes the NADPH-dependent reduction of 7-cyano-7-deazaguanine (preQ0) to 7-aminomethyl-7-deazaguanine (preQ1). This is NADPH-dependent 7-cyano-7-deazaguanine reductase from Shewanella sp. (strain MR-4).